The primary structure comprises 307 residues: Elongation factor Ts, mitochondrial (307 aa).

The transit peptide at 1–19 (MIFTRLTRFVGHGTGLRLY) directs the protein to the mitochondrion.

It belongs to the EF-Ts family.

The protein localises to the mitochondrion. Functionally, associates with the EF-Tu.GDP complex and induces the exchange of GDP to GTP. It remains bound to the aminoacyl-tRNA.EF-Tu.GTP complex up to the GTP hydrolysis stage on the ribosome. This Aedes aegypti (Yellowfever mosquito) protein is Elongation factor Ts, mitochondrial.